The primary structure comprises 321 residues: Endoglucanase 1 (321 aa).

A signal peptide spans 1-27 (MSRKLRTLMAALCALPLAFAAAPPAHA). Asp-110 is a catalytic residue. Cys-112 and Cys-156 are oxidised to a cystine. Asp-149 serves as the catalytic Proton donor. Asp-295 functions as the Nucleophile in the catalytic mechanism.

Belongs to the glycosyl hydrolase 6 (cellulase B) family.

It catalyses the reaction Endohydrolysis of (1-&gt;4)-beta-D-glucosidic linkages in cellulose, lichenin and cereal beta-D-glucans.. Its function is as follows. Implicated in the mechanism of induction exerted by cellobiose. The protein is Endoglucanase 1 (celA1) of Streptomyces halstedii.